A 510-amino-acid chain; its full sequence is MSAANVPLEATWQGHVASTLDAVVLFEACLSGNLRHVPRRPHDRERQDLIQSGQIFIYEEHASGIKRWTDGVTWSPSRILGNYLIYRELERPFPPGEKKRAAKKNKKQTNGGISKSEGCLRQNTGMNGTATGANAANLSSAGSMDPSEASRNPERALIGSLVDSYPFKEGGLVKKTISVQFRSVPHHLVSYYTVQDVMSGALATPTSHSGFLRNIVPRPELILNQNFRAPIDEVDVDDNRLIQHPLSSAHQEYVNHMHPPTFRTWSVPHVNMAVANPRQWPTSMVPAQQQQMPPPQHAQYLQTHPGAMAAPMPPPNYAQPSTHHPYAYQDGVMRPQVTTSSTLAPDVYRNMLVDQPLSRRHSTAYDLSNSSHAIGLTQTMSNNPVDPIRNMSHPFMQATPVYGNSGRLQEPVQHSDAFPSPRTLPQQEPGLDGSQQHSASLKLEGEESHLQHNNSWGTYDVAATHDVFLGGTNTDQSQPFLNPEGEEEQYDENNPPPTWPPGSNNSMGRL.

Disordered regions lie at residues 94–152 (PPGE…ASRN), 393–438 (HPFM…QQHS), and 469–510 (LGGT…MGRL). Low complexity predominate over residues 123–143 (NTGMNGTATGANAANLSSAGS). 2 stretches are compositionally biased toward polar residues: residues 471–480 (GTNTDQSQPF) and 501–510 (PGSNNSMGRL).

This sequence belongs to the MIT1/WOR1 family.

The protein resides in the nucleus. Its function is as follows. Global transcriptional regulator of pathogenicity. Differentially regulates expression of effector genes. Also required for radial growth and production of asexual conidiospores, and plays a role in mycelium pigmentation. Not required for induction of Ave1, the effector that activates resistance mediated by the Ve1 immune receptor in tomato. This Verticillium dahliae (strain VdLs.17 / ATCC MYA-4575 / FGSC 10137) (Verticillium wilt) protein is Global transcription regulator sge1.